We begin with the raw amino-acid sequence, 183 residues long: Peptidyl-prolyl cis-trans isomerase 11 (183 aa).

A PPIase cyclophilin-type domain is found at Phe-20 to Gln-182.

Belongs to the cyclophilin-type PPIase family. PPIase H subfamily.

It carries out the reaction [protein]-peptidylproline (omega=180) = [protein]-peptidylproline (omega=0). PPIases accelerate the folding of proteins. It catalyzes the cis-trans isomerization of proline imidic peptide bonds in oligopeptides. In Caenorhabditis elegans, this protein is Peptidyl-prolyl cis-trans isomerase 11 (cyn-11).